The following is a 626-amino-acid chain: Protein ALEX (626 aa).

4 disordered regions span residues 1 to 29 (MMAR…LEPM), 173 to 223 (TTAH…AAHP), 236 to 473 (AAPG…APRS), and 556 to 612 (AASV…NNSR). Polar residues-rich tracts occupy residues 186–195 (KSTAAASSRQ) and 255–270 (GSTT…QSRL). Basic and acidic residues predominate over residues 281 to 312 (QIRESEQRDPQLRRKQQRWKEPLMPRREEKYP). Residues 337-346 (QPILTPGQPQ) are compositionally biased toward low complexity. Pro residues predominate over residues 366-399 (IPTPGQPLPPQPIPTPGRPLTPQPIPTPGRPLTP). A compositionally biased stretch (low complexity) spans 416 to 435 (RLLRPGQPMSPQLRQTQGLP). The segment covering 436 to 445 (LPQPLLPPGQ) has biased composition (pro residues). Positions 570-579 (ALSRSRRYPW) are enriched in basic residues. Positions 600-611 (RRNAVSSSTNNS) are enriched in polar residues.

This sequence belongs to the ALEX family. As to quaternary structure, interacts with the N-terminal region of the XLas isoforms of guanine nucleotide-binding protein G(s) subunit alpha.

It localises to the cell membrane. Its subcellular location is the cell projection. The protein localises to the ruffle. Functionally, may inhibit the adenylyl cyclase-stimulating activity of guanine nucleotide-binding protein G(s) subunit alpha which is produced from the same locus in a different open reading frame. In Homo sapiens (Human), this protein is Protein ALEX.